A 206-amino-acid polypeptide reads, in one-letter code: Imidazoleglycerol-phosphate dehydratase (206 aa).

Residues 1–24 (MDPTASGRQAPRNPRQATVQRETK) are disordered.

This sequence belongs to the imidazoleglycerol-phosphate dehydratase family.

The protein localises to the cytoplasm. It catalyses the reaction D-erythro-1-(imidazol-4-yl)glycerol 3-phosphate = 3-(imidazol-4-yl)-2-oxopropyl phosphate + H2O. The protein operates within amino-acid biosynthesis; L-histidine biosynthesis; L-histidine from 5-phospho-alpha-D-ribose 1-diphosphate: step 6/9. The polypeptide is Imidazoleglycerol-phosphate dehydratase (Acidothermus cellulolyticus (strain ATCC 43068 / DSM 8971 / 11B)).